The following is a 319-amino-acid chain: Ribosomal RNA small subunit methyltransferase H (319 aa).

S-adenosyl-L-methionine contacts are provided by residues 35–37 (AGH), D55, F84, D104, and Q111.

The protein belongs to the methyltransferase superfamily. RsmH family.

The protein resides in the cytoplasm. The enzyme catalyses cytidine(1402) in 16S rRNA + S-adenosyl-L-methionine = N(4)-methylcytidine(1402) in 16S rRNA + S-adenosyl-L-homocysteine + H(+). Its function is as follows. Specifically methylates the N4 position of cytidine in position 1402 (C1402) of 16S rRNA. This Enterococcus hirae protein is Ribosomal RNA small subunit methyltransferase H.